Reading from the N-terminus, the 396-residue chain is S-arrestin (396 aa).

This sequence belongs to the arrestin family.

Functionally, arrestin is one of the major proteins of the ros (retinal rod outer segments); it binds to photoactivated-phosphorylated rhodopsin, thereby apparently preventing the transducin-mediated activation of phosphodiesterase. This Aquarana catesbeiana (American bullfrog) protein is S-arrestin.